The sequence spans 277 residues: MAIKKYKPTSNGRRGMTSSDFAEITTDQPEKSLLAPLHKKGGRNNQGKLTVRHQGGGHKRQYRIIDFKRDKDGIPGRVATVEYDPNRSANIALINYVDGEKRYILAPKGLQVGTEIMSGPEADIKVGNALPLINIPVGTVVHNIELKPGKGGQLVRSAGTSAQVLGKEGKYVLVRLNSGEVRMILSACRATIGQVGNEQHELINIGKAGRSRWKGVRPTVRGSVMNPNDHPHGGGEGRAPIGRKSPMSPWGKPTLGFKTRKKKNKSDKFIVRRRKNK.

Disordered stretches follow at residues 1 to 23 (MAIKKYKPTSNGRRGMTSSDFAE), 36 to 58 (PLHKKGGRNNQGKLTVRHQGGGH), and 219 to 277 (TVRG…RKNK). Polar residues predominate over residues 8–20 (PTSNGRRGMTSSD). The segment covering 258-277 (KTRKKKNKSDKFIVRRRKNK) has biased composition (basic residues).

It belongs to the universal ribosomal protein uL2 family. In terms of assembly, part of the 50S ribosomal subunit. Forms a bridge to the 30S subunit in the 70S ribosome.

Its function is as follows. One of the primary rRNA binding proteins. Required for association of the 30S and 50S subunits to form the 70S ribosome, for tRNA binding and peptide bond formation. It has been suggested to have peptidyltransferase activity; this is somewhat controversial. Makes several contacts with the 16S rRNA in the 70S ribosome. This is Large ribosomal subunit protein uL2 from Bacillus licheniformis (strain ATCC 14580 / DSM 13 / JCM 2505 / CCUG 7422 / NBRC 12200 / NCIMB 9375 / NCTC 10341 / NRRL NRS-1264 / Gibson 46).